The sequence spans 478 residues: Noelin-3 (478 aa).

An N-terminal signal peptide occupies residues 1-23; sequence MSPPLLKLGAVLSTMAMISNWMS. N-linked (GlcNAc...) asparagine glycosylation is found at Asn-33, Asn-95, Asn-179, Asn-299, and Asn-465. Residues 77 to 217 are a coiled coil; sequence CSRDAKSRQL…TRLRDCMKKL (141 aa). An Olfactomedin-like domain is found at 218–470; that stretch reads TCGKLMKITG…QVLFNVTLFH (253 aa). Cys-219 and Cys-401 are joined by a disulfide.

Peripherally associated with AMPAR complex. AMPAR complex consists of an inner core made of 4 pore-forming GluA/GRIA proteins (GRIA1, GRIA2, GRIA3 and GRIA4) and 4 major auxiliary subunits arranged in a twofold symmetry. One of the two pairs of distinct binding sites is occupied either by CNIH2, CNIH3 or CACNG2, CACNG3. The other harbors CACNG2, CACNG3, CACNG4, CACNG8 or GSG1L. This inner core of AMPAR complex is complemented by outer core constituents binding directly to the GluA/GRIA proteins at sites distinct from the interaction sites of the inner core constituents. Outer core constituents include at least PRRT1, PRRT2, CKAMP44/SHISA9, FRRS1L and NRN1. The proteins of the inner and outer core serve as a platform for other, more peripherally associated AMPAR constituents, including OLFM3. Alone or in combination, these auxiliary subunits control the gating and pharmacology of the AMPAR complex and profoundly impact their biogenesis and protein processing. Homodimer. Interacts with MYOC. Interacts with OLFM2. As to expression, in the eye, expressed in trabecular meshwork and neural retina; in non-ocular tissues, expressed in brain and lung.

It is found in the secreted. The protein localises to the synapse. In Homo sapiens (Human), this protein is Noelin-3 (OLFM3).